Reading from the N-terminus, the 196-residue chain is ATP-dependent Clp protease proteolytic subunit (196 aa).

The Nucleophile role is filled by S101. H126 is a catalytic residue.

Belongs to the peptidase S14 family. As to quaternary structure, component of the chloroplastic Clp protease core complex.

It localises to the plastid. The protein resides in the chloroplast stroma. The catalysed reaction is Hydrolysis of proteins to small peptides in the presence of ATP and magnesium. alpha-casein is the usual test substrate. In the absence of ATP, only oligopeptides shorter than five residues are hydrolyzed (such as succinyl-Leu-Tyr-|-NHMec, and Leu-Tyr-Leu-|-Tyr-Trp, in which cleavage of the -Tyr-|-Leu- and -Tyr-|-Trp bonds also occurs).. Functionally, cleaves peptides in various proteins in a process that requires ATP hydrolysis. Has a chymotrypsin-like activity. Plays a major role in the degradation of misfolded proteins. This Lepidium virginicum (Virginia pepperweed) protein is ATP-dependent Clp protease proteolytic subunit.